A 101-amino-acid chain; its full sequence is MTEHNHDHDHEGHEHITLVDEQGNETLYEILLTVDGQEEFGKNYVLLYPAGIPEDEDVELQAYSYVENAEGTEGDLQQIETDAEWDMIEEVFNTFMAEEEE.

This sequence belongs to the UPF0473 family.

The protein is UPF0473 protein EF_1204 of Enterococcus faecalis (strain ATCC 700802 / V583).